The following is a 107-amino-acid chain: UPF0060 membrane protein Sala_0701 (107 aa).

Transmembrane regions (helical) follow at residues 4–24, 30–50, 60–80, and 87–107; these read FAYI…WAWL, VWWV…LTLV, AAYG…VEGA, and LIGA…PRGG.

This sequence belongs to the UPF0060 family.

It is found in the cell inner membrane. The chain is UPF0060 membrane protein Sala_0701 from Sphingopyxis alaskensis (strain DSM 13593 / LMG 18877 / RB2256) (Sphingomonas alaskensis).